We begin with the raw amino-acid sequence, 326 residues long: dTDP-4-dehydro-6-deoxy-D-allose reductase (326 aa).

Residues 15 to 21 (GALGFIG) and 129 to 132 (MSSS) contribute to the NADP(+) site. Residue Tyr160 is the Proton donor/acceptor of the active site. Residues Lys164 and 187–190 (PGNV) each bind NADP(+).

It belongs to the NAD(P)-dependent epimerase/dehydratase family.

It catalyses the reaction dTDP-6-deoxy-alpha-D-allose + NAD(+) = dTDP-4-dehydro-6-deoxy-alpha-D-allose + NADH + H(+). It carries out the reaction dTDP-6-deoxy-alpha-D-allose + NADP(+) = dTDP-4-dehydro-6-deoxy-alpha-D-allose + NADPH + H(+). Its function is as follows. Catalyzes the stereospecific reduction of the C-4 keto group of dTDP-4-dehydro-6-deoxy-D-allose, leading to dTDP-6-deoxy-D-allose, an intermediate in the biosynthesis of the mycinose moiety of the chalcomycin antibiotic. The sequence is that of dTDP-4-dehydro-6-deoxy-D-allose reductase (chmD) from Streptomyces bikiniensis.